A 279-amino-acid chain; its full sequence is Energy-coupling factor transporter ATP-binding protein EcfA1 (279 aa).

One can recognise an ABC transporter domain in the interval 5-240 (IELKKVTFNY…GDELLQLGLD (236 aa)). ATP is bound at residue 40–47 (GHNGSGKS).

It belongs to the ABC transporter superfamily. Energy-coupling factor EcfA family. Forms a stable energy-coupling factor (ECF) transporter complex composed of 2 membrane-embedded substrate-binding proteins (S component), 2 ATP-binding proteins (A component) and 2 transmembrane proteins (T component).

The protein localises to the cell membrane. In terms of biological role, ATP-binding (A) component of a common energy-coupling factor (ECF) ABC-transporter complex. Unlike classic ABC transporters this ECF transporter provides the energy necessary to transport a number of different substrates. The chain is Energy-coupling factor transporter ATP-binding protein EcfA1 from Streptococcus pyogenes serotype M28 (strain MGAS6180).